The following is a 616-amino-acid chain: Glutamine--fructose-6-phosphate aminotransferase [isomerizing] (616 aa).

The Nucleophile; for GATase activity role is filled by C2. The Glutamine amidotransferase type-2 domain occupies 2–222 (CGIIGYSGPR…QERIVALSGD (221 aa)). Residues 70-89 (TGIGHTRWATHGEPSDRNAH) form a disordered region. 2 consecutive SIS domains span residues 289-428 (IRDD…LRGF) and 461-606 (LAHW…VDRP). The active-site For Fru-6P isomerization activity is K611.

In terms of assembly, homodimer.

The protein resides in the cytoplasm. The enzyme catalyses D-fructose 6-phosphate + L-glutamine = D-glucosamine 6-phosphate + L-glutamate. Its function is as follows. Catalyzes the first step in hexosamine metabolism, converting fructose-6P into glucosamine-6P using glutamine as a nitrogen source. The protein is Glutamine--fructose-6-phosphate aminotransferase [isomerizing] of Tropheryma whipplei (strain TW08/27) (Whipple's bacillus).